Here is a 348-residue protein sequence, read N- to C-terminus: Phosphate acyltransferase (348 aa).

This sequence belongs to the PlsX family. As to quaternary structure, homodimer. Probably interacts with PlsY.

It is found in the cytoplasm. The catalysed reaction is a fatty acyl-[ACP] + phosphate = an acyl phosphate + holo-[ACP]. Its pathway is lipid metabolism; phospholipid metabolism. Catalyzes the reversible formation of acyl-phosphate (acyl-PO(4)) from acyl-[acyl-carrier-protein] (acyl-ACP). This enzyme utilizes acyl-ACP as fatty acyl donor, but not acyl-CoA. The polypeptide is Phosphate acyltransferase (Oenococcus oeni (strain ATCC BAA-331 / PSU-1)).